The following is a 603-amino-acid chain: Peroxisomal targeting signal receptor (603 aa).

A Glycyl cysteine thioester (Cys-Gly) (interchain with G-Cter in ubiquitin) cross-link involves residue Cys-10. The segment at 11–33 (SANSNAIAQFNKHTQQDRSLQRQ) is amphipathic helix 1 (AH1). A Glycyl lysine isopeptide (Lys-Gly) (interchain with G-Cter in ubiquitin) cross-link involves residue Lys-22. Residues 23–49 (HTQQDRSLQRQAANQQGIVQNGQGFKK) are disordered. Positions 31–45 (QRQAANQQGIVQNGQ) are enriched in polar residues. The tract at residues 58–76 (RQNMDQFMNNGPSQSNFQF) is amphipathic helix 2 (AH2). Short sequence motifs (wxxxF/Y motif) lie at residues 99–103 (WTNEF), 128–132 (WATEF), and 192–196 (WDNQF). Positions 232-248 (FQEVWDSLNSEEVENDF) are amphipathic helix 4 (AH4). A WxxxF/Y motif 4 motif is present at residues 271–275 (WEKDF). TPR repeat units lie at residues 304 to 338 (ESDPYEIGLQLMENGAKLSEAALAFEAAIQRNEGH), 339 to 372 (INAWLKLGEVQTQNEKEIAGISALEKCLELHPEN), 449 to 482 (PDVQMGLGVLFYANEDFDKTIDCFKAALSIKPDD), 484 to 516 (VLWNRLGASLANSNRSEEAVDAYFKALELKPTF), and 518 to 550 (RARYNLGVSCINIGCYKEAAEHLLSGLSMHQVE).

Belongs to the peroxisomal targeting signal receptor family. Interacts (via WxxxF/Y and LVxEF motifs) with PEX14; promoting translocation through the PEX13-PEX14 docking complex. Monoubiquitinated at Cys-10 by PEX2 during PEX5 passage through the retrotranslocation channel: monoubiquitination acts as a signal for PEX5 extraction and is required for proper export from peroxisomes and recycling. When PEX5 recycling is compromised, polyubiquitinated at Lys-22 by PEX10 during its passage through the retrotranslocation channel, leading to its degradation.

Its subcellular location is the cytoplasm. It is found in the cytosol. It localises to the peroxisome matrix. In terms of biological role, receptor that mediates peroxisomal import of proteins containing a C-terminal PTS1-type tripeptide peroxisomal targeting signal (SKL-type). Binds to cargo proteins containing a PTS1 peroxisomal targeting signal in the cytosol, and translocates them into the peroxisome matrix by passing through the PEX13-PEX14 docking complex along with cargo proteins. PEX5 receptor is then retrotranslocated into the cytosol, leading to release of bound cargo in the peroxisome matrix, and reset for a subsequent peroxisome import cycle. The sequence is that of Peroxisomal targeting signal receptor (PEX5) from Debaryomyces hansenii (strain ATCC 36239 / CBS 767 / BCRC 21394 / JCM 1990 / NBRC 0083 / IGC 2968) (Yeast).